The chain runs to 146 residues: MKIYVDADACPVKDVIIFEATNVEIPVTLVTSFSHYSNAEQPKGVETIYVDSGADAADYRIMQLAKKEDLIVTQDYGLASLALAKGCIVLHHKGYKYTNDNIEQLLQTRYLSAMVRKSGKRTKGPKPFTAEDKEKFRALFKSMIAH.

The protein belongs to the UPF0178 family.

The polypeptide is UPF0178 protein BCG9842_B2187 (Bacillus cereus (strain G9842)).